Reading from the N-terminus, the 515-residue chain is 2-isopropylmalate synthase (515 aa).

The Pyruvate carboxyltransferase domain maps to 5–267; the sequence is VIIFDTTLRD…HTNLKHDEIH (263 aa). Mn(2+) is bound by residues Asp14, His202, His204, and Asn238. The segment at 392-515 is regulatory domain; that stretch reads KLNYLSVQSG…EIKQKKVETV (124 aa).

It belongs to the alpha-IPM synthase/homocitrate synthase family. LeuA type 1 subfamily. As to quaternary structure, homodimer. It depends on Mn(2+) as a cofactor.

It localises to the cytoplasm. The enzyme catalyses 3-methyl-2-oxobutanoate + acetyl-CoA + H2O = (2S)-2-isopropylmalate + CoA + H(+). Its pathway is amino-acid biosynthesis; L-leucine biosynthesis; L-leucine from 3-methyl-2-oxobutanoate: step 1/4. In terms of biological role, catalyzes the condensation of the acetyl group of acetyl-CoA with 3-methyl-2-oxobutanoate (2-ketoisovalerate) to form 3-carboxy-3-hydroxy-4-methylpentanoate (2-isopropylmalate). This Aliivibrio fischeri (strain MJ11) (Vibrio fischeri) protein is 2-isopropylmalate synthase.